The primary structure comprises 275 residues: 2,3,4,5-tetrahydropyridine-2,6-dicarboxylate N-succinyltransferase (275 aa).

The substrate site is built by arginine 104 and aspartate 141.

Belongs to the transferase hexapeptide repeat family. In terms of assembly, homotrimer.

It is found in the cytoplasm. The enzyme catalyses (S)-2,3,4,5-tetrahydrodipicolinate + succinyl-CoA + H2O = (S)-2-succinylamino-6-oxoheptanedioate + CoA. Its pathway is amino-acid biosynthesis; L-lysine biosynthesis via DAP pathway; LL-2,6-diaminopimelate from (S)-tetrahydrodipicolinate (succinylase route): step 1/3. This Aeromonas hydrophila subsp. hydrophila (strain ATCC 7966 / DSM 30187 / BCRC 13018 / CCUG 14551 / JCM 1027 / KCTC 2358 / NCIMB 9240 / NCTC 8049) protein is 2,3,4,5-tetrahydropyridine-2,6-dicarboxylate N-succinyltransferase.